A 367-amino-acid polypeptide reads, in one-letter code: Di-N-acetylchitobiase (367 aa).

The signal sequence occupies residues 1 to 23; the sequence is MALSDLLELTLLLLLPLLERLSA. Residues 24–367 enclose the GH18 domain; sequence EDCPCSEASL…EMWGALRPRL (344 aa). Catalysis depends on glutamate 128, which acts as the Proton donor. 4 N-linked (GlcNAc...) asparagine glycosylation sites follow: asparagine 178, asparagine 213, asparagine 247, and asparagine 284.

The protein belongs to the glycosyl hydrolase 18 family.

It is found in the lysosome. In terms of biological role, involved in the degradation of asparagine-linked glycoproteins. Hydrolyze of N-acetyl-beta-D-glucosamine (1-4)N-acetylglucosamine chitobiose core from the reducing end of the bond, it requires prior cleavage by glycosylasparaginase. The polypeptide is Di-N-acetylchitobiase (Ctbs) (Rattus norvegicus (Rat)).